Consider the following 590-residue polypeptide: UvrABC system protein C (590 aa).

Residues 14-91 (DQPGCYLMKD…IKKHDPKYNV (78 aa)) enclose the GIY-YIG domain. A UVR domain is found at 196 to 231 (NEVKKELEEKMHEAAENLEFERAKELRDQIAHIEST).

It belongs to the UvrC family. As to quaternary structure, interacts with UvrB in an incision complex.

It localises to the cytoplasm. Its function is as follows. The UvrABC repair system catalyzes the recognition and processing of DNA lesions. UvrC both incises the 5' and 3' sides of the lesion. The N-terminal half is responsible for the 3' incision and the C-terminal half is responsible for the 5' incision. This chain is UvrABC system protein C, found in Bacillus subtilis (strain 168).